Here is a 368-residue protein sequence, read N- to C-terminus: tRNA-specific 2-thiouridylase MnmA (368 aa).

ATP is bound by residues 11-18 and methionine 37; that span reads GMSGGVDS. Residues 97 to 99 form an interaction with target base in tRNA region; it reads NPD. The active-site Nucleophile is the cysteine 102. A disulfide bond links cysteine 102 and cysteine 199. Glycine 127 provides a ligand contact to ATP. The segment at 149 to 151 is interaction with tRNA; sequence KDQ. Cysteine 199 (cysteine persulfide intermediate) is an active-site residue. Positions 311–312 are interaction with tRNA; it reads RY.

Belongs to the MnmA/TRMU family. As to quaternary structure, interacts with TusE.

It localises to the cytoplasm. It carries out the reaction S-sulfanyl-L-cysteinyl-[protein] + uridine(34) in tRNA + AH2 + ATP = 2-thiouridine(34) in tRNA + L-cysteinyl-[protein] + A + AMP + diphosphate + H(+). Catalyzes the 2-thiolation of uridine at the wobble position (U34) of tRNA(Lys), tRNA(Glu) and tRNA(Gln), leading to the formation of s(2)U34, the first step of tRNA-mnm(5)s(2)U34 synthesis. Sulfur is provided by IscS, via a sulfur-relay system. Binds ATP and its substrate tRNAs. This Salmonella typhimurium (strain LT2 / SGSC1412 / ATCC 700720) protein is tRNA-specific 2-thiouridylase MnmA.